Consider the following 346-residue polypeptide: Histidinol-phosphate aminotransferase (346 aa).

Position 206 is an N6-(pyridoxal phosphate)lysine (Lys-206).

Belongs to the class-II pyridoxal-phosphate-dependent aminotransferase family. Histidinol-phosphate aminotransferase subfamily. In terms of assembly, homodimer. The cofactor is pyridoxal 5'-phosphate.

It catalyses the reaction L-histidinol phosphate + 2-oxoglutarate = 3-(imidazol-4-yl)-2-oxopropyl phosphate + L-glutamate. It participates in amino-acid biosynthesis; L-histidine biosynthesis; L-histidine from 5-phospho-alpha-D-ribose 1-diphosphate: step 7/9. The chain is Histidinol-phosphate aminotransferase from Bacteroides thetaiotaomicron (strain ATCC 29148 / DSM 2079 / JCM 5827 / CCUG 10774 / NCTC 10582 / VPI-5482 / E50).